The following is a 466-amino-acid chain: Ribulose bisphosphate carboxylase large chain (466 aa).

Position 5 is an N6,N6,N6-trimethyllysine (lysine 5). Substrate contacts are provided by asparagine 114 and threonine 164. Lysine 166 acts as the Proton acceptor in catalysis. Substrate is bound at residue lysine 168. Residues lysine 192, aspartate 194, and glutamate 195 each contribute to the Mg(2+) site. Lysine 192 carries the post-translational modification N6-carboxylysine. The active-site Proton acceptor is the histidine 285. Substrate contacts are provided by arginine 286, histidine 318, and serine 370.

It belongs to the RuBisCO large chain family. Type I subfamily. In terms of assembly, heterohexadecamer of 8 large chains and 8 small chains; disulfide-linked. The disulfide link is formed within the large subunit homodimers. It depends on Mg(2+) as a cofactor. In terms of processing, the disulfide bond which can form in the large chain dimeric partners within the hexadecamer appears to be associated with oxidative stress and protein turnover.

Its subcellular location is the plastid. It is found in the chloroplast. It catalyses the reaction 2 (2R)-3-phosphoglycerate + 2 H(+) = D-ribulose 1,5-bisphosphate + CO2 + H2O. The catalysed reaction is D-ribulose 1,5-bisphosphate + O2 = 2-phosphoglycolate + (2R)-3-phosphoglycerate + 2 H(+). Functionally, ruBisCO catalyzes two reactions: the carboxylation of D-ribulose 1,5-bisphosphate, the primary event in carbon dioxide fixation, as well as the oxidative fragmentation of the pentose substrate in the photorespiration process. Both reactions occur simultaneously and in competition at the same active site. This Thespesia populnea (Portia tree) protein is Ribulose bisphosphate carboxylase large chain.